Here is a 631-residue protein sequence, read N- to C-terminus: Mitochondrial Rho GTPase 1 (631 aa).

At 1–605 the chain is on the cytoplasmic side; that stretch reads MPAGRGRPLR…TQADLKSSTF (605 aa). The Miro 1 domain occupies 15–181; sequence KKDVRILLVG…FYYAQKAVLH (167 aa). The GTP site is built by R27, G29, K30, T31, and S32. A Mg(2+)-binding site is contributed by T31. Positions 48 and 70 each coordinate Mg(2+). Residue S72 participates in GTP binding. K105 is subject to N6-acetyllysine. N131, K132, D134, A162, and K163 together coordinate GTP. A Glycyl lysine isopeptide (Lys-Gly) (interchain with G-Cter in ubiquitin) cross-link involves residue K166. Residues 197–232 enclose the EF-hand 1 domain; that stretch reads ACIKALTRIFKISDQDNDGTLNDAELNFFQRICFNT. The Ca(2+) site is built by D210, D212, D214, T216, and E221. Residue K248 forms a Glycyl lysine isopeptide (Lys-Gly) (interchain with G-Cter in ubiquitin) linkage. In terms of domain architecture, EF-hand 2 spans 317–352; it reads HAYLFLQSTFDKHDLDRDCALSPDELKDLFKVFPYI. Ca(2+) is bound by residues D330, D332, D334, A336, and E341. The 164-residue stretch at 429–592 folds into the Miro 2 domain; that stretch reads RNVFRCNVIG…FVKLTTMAMY (164 aa). Residues N441, C442, G443, K444, S445, G446, K460, K541, D543, T571, and C572 each contribute to the GTP site. N441 provides a ligand contact to Mg(2+). K585 participates in a covalent cross-link: Glycyl lysine isopeptide (Lys-Gly) (interchain with G-Cter in ubiquitin). A helical; Anchor for type IV membrane protein membrane pass occupies residues 606–628; it reads WLRASFGATVFAVLGFAMYKALL. Over 629–631 the chain is Mitochondrial intermembrane; the sequence is KQR.

Belongs to the mitochondrial Rho GTPase family. Homodimer. Interacts with the kinesin-binding proteins TRAK1/OIP106 and TRAK2/GRIF1, forming a link between mitochondria and the trafficking apparatus of the microtubules. Interacts with RAP1GDS1. Interacts with ARMCX1. Found in a complex with KIF5B, OGT, RHOT2 and TRAK1. In terms of processing, ubiquitinated by PRKN during mitophagy, leading to its degradation and enhancement of mitophagy. Deubiquitinated by USP30. Post-translationally, acetylation on Lys-105 decreases sensitivity of mitochondrial transport to elevated Ca(2+) levels, increases mitochondrial transport and promotes axon growth. Deacetylated by HDAC6 which blocks mitochondrial transport and mediates axon growth inhibition.

Its subcellular location is the mitochondrion outer membrane. The enzyme catalyses GTP + H2O = GDP + phosphate + H(+). It carries out the reaction ATP + H2O = ADP + phosphate + H(+). It catalyses the reaction UTP + H2O = UDP + phosphate + H(+). Its function is as follows. Atypical mitochondrial nucleoside-triphosphatase (NTPase) involved in mitochondrial trafficking. Probably involved in control of anterograde transport of mitochondria and their subcellular distribution. Promotes mitochondrial fission during high calcium conditions. Can hydrolyze GTP, ATP and UTP. The chain is Mitochondrial Rho GTPase 1 (RHOT1) from Bos taurus (Bovine).